The following is a 395-amino-acid chain: Probable eukaryotic translation initiation factor 5 (395 aa).

Gly28 to Thr35 is a binding site for GTP. Disordered regions lie at residues Pro146–Glu171 and Leu374–Glu395. Over residues Pro147–Arg157 the composition is skewed to basic residues. 2 stretches are compositionally biased toward acidic residues: residues Val161–Asp170 and Ala377–Glu395. A W2 domain is found at Glu228–Glu384.

It belongs to the eIF-2-beta/eIF-5 family. Monomer.

Its function is as follows. Catalyzes the hydrolysis of GTP bound to the 40S ribosomal initiation complex (40S.mRNA.Met-tRNA[F].eIF-2.GTP) with the subsequent joining of a 60S ribosomal subunit resulting in the release of eIF-2 and the guanine nucleotide. The subsequent joining of a 60S ribosomal subunit results in the formation of a functional 80S initiation complex (80S.mRNA.Met-tRNA[F]). The protein is Probable eukaryotic translation initiation factor 5 (tif5) of Schizosaccharomyces pombe (strain 972 / ATCC 24843) (Fission yeast).